A 99-amino-acid chain; its full sequence is MAQKDNFAGGFLLGTVIGGVVGGILGSVLANRAATQSPDREKLDTEGVGNLDSEENIELARRRLEDKIAQLNLVIDDVRDQLGHVNELNNIKEVQEEHR.

Residues 10–30 (GFLLGTVIGGVVGGILGSVLA) form a helical membrane-spanning segment. A coiled-coil region spans residues 50–84 (NLDSEENIELARRRLEDKIAQLNLVIDDVRDQLGH).

Its subcellular location is the cellular thylakoid membrane. The protein is Thylakoid membrane protein ssl2009 of Synechocystis sp. (strain ATCC 27184 / PCC 6803 / Kazusa).